Reading from the N-terminus, the 292-residue chain is 11-beta-hydroxysteroid dehydrogenase 1 (292 aa).

Residues 1-7 (MAFMKKY) lie on the Cytoplasmic side of the membrane. The chain crosses the membrane as a helical; Signal-anchor for type II membrane protein span at residues 8–24 (LLPILGIFLAYYYYSAN). Residues 25–292 (EEFRPEMLRG…KYNMERFINN (268 aa)) lie on the Lumenal side of the membrane. Residues 41–67 (GASK…TARS) and 92–93 (TM) contribute to the NADP(+) site. An N-linked (GlcNAc...) asparagine glycan is attached at Asn95. Residue 119–121 (NHI) coordinates NADP(+). A substrate-binding site is contributed by Ser170. Tyr183 serves as the catalytic Proton acceptor. 183–187 (YSASK) contributes to the NADP(+) binding site. A glycan (N-linked (GlcNAc...) asparagine) is linked at Asn207. NADP(+) contacts are provided by residues 216 to 222 (GLIDTDT) and 218 to 222 (IDTDT).

The protein belongs to the short-chain dehydrogenases/reductases (SDR) family. As to quaternary structure, homodimer. Liver, kidney, lung, hypothalamus, anterior pituitary and placenta.

The protein localises to the endoplasmic reticulum membrane. It carries out the reaction an 11beta-hydroxysteroid + NADP(+) = an 11-oxosteroid + NADPH + H(+). The enzyme catalyses corticosterone + NADP(+) = 11-dehydrocorticosterone + NADPH + H(+). It catalyses the reaction cortisone + NADPH + H(+) = cortisol + NADP(+). The catalysed reaction is a 7beta-hydroxysteroid + NADP(+) = a 7-oxosteroid + NADPH + H(+). It carries out the reaction 7-oxocholesterol + NADPH + H(+) = 7beta-hydroxycholesterol + NADP(+). The enzyme catalyses chenodeoxycholate + NADP(+) = 7-oxolithocholate + NADPH + H(+). It catalyses the reaction 7-oxolithocholate + NADPH + H(+) = ursodeoxycholate + NADP(+). The catalysed reaction is glycochenodeoxycholate + NADP(+) = 7-oxoglycolithocholate + NADPH + H(+). It carries out the reaction taurochenodeoxycholate + NADP(+) = 7-oxotaurolithocholate + NADPH + H(+). The enzyme catalyses tauroursodeoxycholate + NADP(+) = 7-oxotaurolithocholate + NADPH + H(+). It catalyses the reaction glycoursodeoxycholate + NADP(+) = 7-oxoglycolithocholate + NADPH + H(+). The catalysed reaction is 7-oxopregnenolone + NADPH + H(+) = 7beta-hydroxypregnenolone + NADP(+). It carries out the reaction 3beta,7alpha-dihydroxyandrost-5-en-17-one + NADP(+) = 3beta-hydroxy-5-androstene-7,17-dione + NADPH + H(+). The enzyme catalyses 3beta-hydroxy-5-androstene-7,17-dione + NADPH + H(+) = 3beta,7beta-dihydroxyandrost-5-en-17-one + NADP(+). It catalyses the reaction 3beta-hydroxy-5alpha-androstane-7,17-dione + NADPH + H(+) = 3beta,7beta-dihydroxy-5alpha-androstan-17-one + NADP(+). In terms of biological role, controls the reversible conversion of biologically active glucocorticoids such as cortisone to cortisol, and 11-dehydrocorticosterone to corticosterone in the presence of NADP(H). Participates in the corticosteroid receptor-mediated anti-inflammatory response, as well as metabolic and homeostatic processes. Plays a role in the secretion of aqueous humor in the eye, maintaining a normotensive, intraocular environment. Bidirectional in vitro, predominantly functions as a reductase in vivo, thereby increasing the concentration of active glucocorticoids. It has broad substrate specificity, besides glucocorticoids, it accepts other steroid and sterol substrates. Interconverts 7-oxo- and 7-hydroxy-neurosteroids such as 7-oxopregnenolone and 7beta-hydroxypregnenolone, 7-oxodehydroepiandrosterone (3beta-hydroxy-5-androstene-7,17-dione) and 7beta-hydroxydehydroepiandrosterone (3beta,7beta-dihydroxyandrost-5-en-17-one), among others. Catalyzes the stereo-specific conversion of the major dietary oxysterol, 7-ketocholesterol (7-oxocholesterol), into the more polar 7-beta-hydroxycholesterol metabolite. 7-oxocholesterol is one of the most important oxysterols, it participates in several events such as induction of apoptosis, accumulation in atherosclerotic lesions, lipid peroxidation, and induction of foam cell formation. Mediates the 7-oxo reduction of 7-oxolithocholate mainly to chenodeoxycholate, and to a lesser extent to ursodeoxycholate, both in its free form and when conjugated to glycine or taurine, providing a link between glucocorticoid activation and bile acid metabolism. Catalyzes the synthesis of 7-beta-25-dihydroxycholesterol from 7-oxo-25-hydroxycholesterol in vitro, which acts as a ligand for the G-protein-coupled receptor (GPCR) Epstein-Barr virus-induced gene 2 (EBI2) and may thereby regulate immune cell migration. In Ovis aries (Sheep), this protein is 11-beta-hydroxysteroid dehydrogenase 1 (HSD11B1).